The sequence spans 793 residues: DnaJ homolog subfamily C member 10 (793 aa).

The first 32 residues, 1–32 (MGVWLNRDEFIRDVKRISLCLLVLYVVIVVGT), serve as a signal peptide directing secretion. One can recognise a J domain in the interval 35 to 100 (NFYSLLGVSK…DLRKKYDKYG (66 aa)). Positions 130-232 (EIITLERREF…ESLVSFAMQH (103 aa)) constitute a Thioredoxin 1 domain. A disulfide bond links C158 and C161. Trxb stretches follow at residues 235–350 (TTVT…LPDF) and 348–463 (PDFE…PQNF). 3 consecutive Thioredoxin domains span residues 454–553 (HVTT…IEDL), 557–665 (SVVS…SWGL), and 671–776 (ASID…ALIY). A disulfide bridge connects residues C480 and C483. A glycan (N-linked (GlcNAc...) asparagine) is linked at N530. 2 cysteine pairs are disulfide-bonded: C588/C591 and C700/C703. The short motif at 790 to 793 (KDEL) is the Prevents secretion from ER element.

As to quaternary structure, interacts with HSPA5 (via its J domain). Interacts with EDEM1.

Its subcellular location is the endoplasmic reticulum lumen. In terms of biological role, endoplasmic reticulum disulfide reductase involved both in the correct folding of proteins and degradation of misfolded proteins. Required for efficient folding of proteins in the endoplasmic reticulum by catalyzing the removal of non-native disulfide bonds formed during the folding of proteins, such as LDLR. Also involved in endoplasmic reticulum-associated degradation (ERAD) by reducing incorrect disulfide bonds in misfolded glycoproteins recognized by EDEM1. Interaction with HSPA5 is required its activity, not for the disulfide reductase activity, but to facilitate the release of DNAJC10 from its substrate. Promotes apoptotic signaling pathway in response to endoplasmic reticulum stress. The polypeptide is DnaJ homolog subfamily C member 10 (Dnajc10) (Rattus norvegicus (Rat)).